Consider the following 130-residue polypeptide: Small ribosomal subunit protein uS9 (130 aa).

The protein belongs to the universal ribosomal protein uS9 family.

This is Small ribosomal subunit protein uS9 from Burkholderia cenocepacia (strain HI2424).